Reading from the N-terminus, the 428-residue chain is Adenylosuccinate synthetase (428 aa).

GTP is bound by residues 12–18 and 40–42; these read GDEGKGK and GHT. Residue Asp-13 is the Proton acceptor of the active site. Positions 13 and 40 each coordinate Mg(2+). Residues 13 to 16, 38 to 41, Thr-130, Arg-144, Gln-225, Thr-240, and Arg-304 contribute to the IMP site; these read DEGK and NAGH. The active-site Proton donor is the His-41. 300–306 contacts substrate; sequence ATTGRPR. Residues Arg-306, 332–334, and 415–417 each bind GTP; these read KLD and SVG.

This sequence belongs to the adenylosuccinate synthetase family. As to quaternary structure, homodimer. Mg(2+) is required as a cofactor.

The protein resides in the cytoplasm. The enzyme catalyses IMP + L-aspartate + GTP = N(6)-(1,2-dicarboxyethyl)-AMP + GDP + phosphate + 2 H(+). The protein operates within purine metabolism; AMP biosynthesis via de novo pathway; AMP from IMP: step 1/2. In terms of biological role, plays an important role in the de novo pathway of purine nucleotide biosynthesis. Catalyzes the first committed step in the biosynthesis of AMP from IMP. This Lawsonia intracellularis (strain PHE/MN1-00) protein is Adenylosuccinate synthetase.